A 456-amino-acid polypeptide reads, in one-letter code: Tyrosinase-like protein 2 (456 aa).

The N-terminal stretch at 1–22 (MNTMALFGKVILLQFLIGVGFC) is a signal peptide. 6 residues coordinate Cu cation: His-145, His-154, His-163, His-295, His-299, and His-322.

The cofactor is Cu(2+). In terms of tissue distribution, prismatic layer of shell (at protein level).

It localises to the secreted. This is Tyrosinase-like protein 2 from Margaritifera margaritifera (Freshwater pearl mussel).